Consider the following 237-residue polypeptide: Pheromone-regulated membrane protein 8 (237 aa).

Over 1-47 the chain is Cytoplasmic; the sequence is MQTPSENTNAKSDSLDEPGAYLIEENVALPKDIFHSYLSYWIYEAAH. Residues 48–68 form a helical membrane-spanning segment; sequence CTPVMLLSLVIGVLISIIILF. At 69-74 the chain is on the extracellular side; the sequence is HDNENC. The chain crosses the membrane as a helical span at residues 75 to 95; it reads VGVSVGFLLIFSGILVIVLIL. Residues 96-237 are Cytoplasmic-facing; sequence RFGPQISDED…QEYPGVDEFF (142 aa). The interval 174 to 201 is disordered; sequence SSASNVKDAQSNDETAGTPNEAAESSSF. Positions 236 to 237 are COPII binding; sequence FF.

Belongs to the DUP/COS family. In terms of assembly, interacts with PRM9. Binds to SEC23/24 of COPII coated vesicles.

The protein resides in the membrane. The protein localises to the endoplasmic reticulum. Functionally, may be involved in endoplasmic reticulum exit trafficking of proteins. The polypeptide is Pheromone-regulated membrane protein 8 (PRM8) (Saccharomyces cerevisiae (strain ATCC 204508 / S288c) (Baker's yeast)).